The primary structure comprises 64 residues: Large ribosomal subunit protein bL35 (64 aa).

Positions 1–55 (MPKMKSNKSVAARFKLTGSGQLKRTRPGKRHKLSKRSSQQKRNLSKQPLVDQGQV) are disordered. Basic residues predominate over residues 23–39 (KRTRPGKRHKLSKRSSQ).

The protein belongs to the bacterial ribosomal protein bL35 family.

The chain is Large ribosomal subunit protein bL35 from Chlamydia muridarum (strain MoPn / Nigg).